Consider the following 433-residue polypeptide: 23S rRNA (uracil(1939)-C(5))-methyltransferase RlmD (433 aa).

Positions Arg10–Arg68 constitute a TRAM domain. 4 residues coordinate [4Fe-4S] cluster: Cys81, Cys87, Cys90, and Cys162. Gln265, Phe294, Asn299, Glu315, Asn342, and Asp363 together coordinate S-adenosyl-L-methionine. Cys389 functions as the Nucleophile in the catalytic mechanism.

The protein belongs to the class I-like SAM-binding methyltransferase superfamily. RNA M5U methyltransferase family. RlmD subfamily.

The catalysed reaction is uridine(1939) in 23S rRNA + S-adenosyl-L-methionine = 5-methyluridine(1939) in 23S rRNA + S-adenosyl-L-homocysteine + H(+). In terms of biological role, catalyzes the formation of 5-methyl-uridine at position 1939 (m5U1939) in 23S rRNA. The protein is 23S rRNA (uracil(1939)-C(5))-methyltransferase RlmD of Escherichia coli O157:H7.